The sequence spans 144 residues: MKSARRRSRELATQGLYQWLLSGSPGGEIDAQLRGAQGFDKADHEHLDAILHGVIRDSEALSAAIAPCLDRPIEQLSPVERAVLLVAAFELKNHVDIPYRVVINEAVELAKTFGGADGYKYVNGVLDKLSAQLRVDETQAARKR.

This sequence belongs to the NusB family.

Functionally, involved in transcription antitermination. Required for transcription of ribosomal RNA (rRNA) genes. Binds specifically to the boxA antiterminator sequence of the ribosomal RNA (rrn) operons. This is Transcription antitermination protein NusB from Paraburkholderia phytofirmans (strain DSM 17436 / LMG 22146 / PsJN) (Burkholderia phytofirmans).